The primary structure comprises 489 residues: L-arabinose isomerase (489 aa).

4 residues coordinate Mn(2+): Glu300, Glu325, His342, and His441.

Belongs to the arabinose isomerase family. It depends on Mn(2+) as a cofactor.

The enzyme catalyses beta-L-arabinopyranose = L-ribulose. Its pathway is carbohydrate degradation; L-arabinose degradation via L-ribulose; D-xylulose 5-phosphate from L-arabinose (bacterial route): step 1/3. In terms of biological role, catalyzes the conversion of L-arabinose to L-ribulose. The chain is L-arabinose isomerase from Clostridium beijerinckii (strain ATCC 51743 / NCIMB 8052) (Clostridium acetobutylicum).